The primary structure comprises 100 residues: ATP-dependent Clp protease adapter protein ClpS (100 aa).

It belongs to the ClpS family. In terms of assembly, binds to the N-terminal domain of the chaperone ClpA.

In terms of biological role, involved in the modulation of the specificity of the ClpAP-mediated ATP-dependent protein degradation. This Nitratidesulfovibrio vulgaris (strain DSM 19637 / Miyazaki F) (Desulfovibrio vulgaris) protein is ATP-dependent Clp protease adapter protein ClpS.